We begin with the raw amino-acid sequence, 168 residues long: Endoribonuclease YbeY (168 aa).

His-122, His-126, and His-132 together coordinate Zn(2+).

This sequence belongs to the endoribonuclease YbeY family. Zn(2+) is required as a cofactor.

The protein localises to the cytoplasm. Single strand-specific metallo-endoribonuclease involved in late-stage 70S ribosome quality control and in maturation of the 3' terminus of the 16S rRNA. This is Endoribonuclease YbeY from Brucella abortus (strain 2308).